The primary structure comprises 380 residues: Queuine tRNA-ribosyltransferase (380 aa).

Asp95 (proton acceptor) is an active-site residue. Residues Asp95–Phe99, Asp149, Gln192, and Gly219 contribute to the substrate site. The tract at residues Gly250–Ala256 is RNA binding. Asp269 functions as the Nucleophile in the catalytic mechanism. The segment at Thr274 to Arg278 is RNA binding; important for wobble base 34 recognition. Residues Cys307, Cys309, Cys312, and His338 each contribute to the Zn(2+) site.

This sequence belongs to the queuine tRNA-ribosyltransferase family. As to quaternary structure, homodimer. Within each dimer, one monomer is responsible for RNA recognition and catalysis, while the other monomer binds to the replacement base PreQ1. Zn(2+) serves as cofactor.

It carries out the reaction 7-aminomethyl-7-carbaguanine + guanosine(34) in tRNA = 7-aminomethyl-7-carbaguanosine(34) in tRNA + guanine. It participates in tRNA modification; tRNA-queuosine biosynthesis. In terms of biological role, catalyzes the base-exchange of a guanine (G) residue with the queuine precursor 7-aminomethyl-7-deazaguanine (PreQ1) at position 34 (anticodon wobble position) in tRNAs with GU(N) anticodons (tRNA-Asp, -Asn, -His and -Tyr). Catalysis occurs through a double-displacement mechanism. The nucleophile active site attacks the C1' of nucleotide 34 to detach the guanine base from the RNA, forming a covalent enzyme-RNA intermediate. The proton acceptor active site deprotonates the incoming PreQ1, allowing a nucleophilic attack on the C1' of the ribose to form the product. After dissociation, two additional enzymatic reactions on the tRNA convert PreQ1 to queuine (Q), resulting in the hypermodified nucleoside queuosine (7-(((4,5-cis-dihydroxy-2-cyclopenten-1-yl)amino)methyl)-7-deazaguanosine). The sequence is that of Queuine tRNA-ribosyltransferase from Pediococcus pentosaceus (strain ATCC 25745 / CCUG 21536 / LMG 10740 / 183-1w).